Here is a 302-residue protein sequence, read N- to C-terminus: Spheroidin-like protein (302 aa).

Residues 1–19 (MIALLIALFAAIHAPAVRS) form the signal peptide. N-linked (GlcNAc...) asparagine; by host glycans are attached at residues N193 and N293.

As to quaternary structure, homodimer; disulfide-linked.

The protein resides in the host membrane. Functionally, component of the virus occlusion bodies, which are large proteinaceous structures (polyhedra), that protect the virus from the outside environment for extended periods until they are ingested by insect larvae. The polypeptide is Spheroidin-like protein (SLP) (Autographa californica nuclear polyhedrosis virus (AcMNPV)).